The chain runs to 601 residues: Glutathione-regulated potassium-efflux system protein KefB (601 aa).

A run of 13 helical transmembrane segments spans residues 4 to 24 (ADLL…VPLA), 29 to 49 (IGAV…GLGF), 55 to 75 (EILH…GLEL), 87 to 107 (IFGV…GLLM), 111 to 131 (FLWQ…TAMA), 152 to 172 (VLLF…LLAG), 177 to 197 (HFDW…LIGG), 207 to 227 (FIAA…LVLS), 230 to 250 (LFMD…GVLL), 262 to 282 (AIDP…GMSL), 284 to 304 (LGVL…LVVI), 324 to 344 (MQFA…FSTA), and 356 to 376 (ALLL…MKGI). Residues 400 to 519 (KPQVIVVGFG…AGVTQFSRET (120 aa)) enclose the RCK N-terminal domain.

Belongs to the monovalent cation:proton antiporter 2 (CPA2) transporter (TC 2.A.37) family. KefB subfamily. Interacts with the regulatory subunit KefG.

The protein localises to the cell inner membrane. Its function is as follows. Pore-forming subunit of a potassium efflux system that confers protection against electrophiles. Catalyzes K(+)/H(+) antiport. The polypeptide is Glutathione-regulated potassium-efflux system protein KefB (Salmonella dublin (strain CT_02021853)).